A 339-amino-acid chain; its full sequence is Ribonucleoside-diphosphate reductase subunit beta (339 aa).

Fe cation contacts are provided by Asp87 and His121. The active site involves Tyr125. His215 lines the Fe cation pocket.

The protein belongs to the ribonucleoside diphosphate reductase small chain family. Tetramer of two alpha and two beta subunits. Fe cation serves as cofactor.

The enzyme catalyses a 2'-deoxyribonucleoside 5'-diphosphate + [thioredoxin]-disulfide + H2O = a ribonucleoside 5'-diphosphate + [thioredoxin]-dithiol. Functionally, provides the precursors necessary for DNA synthesis. Catalyzes the biosynthesis of deoxyribonucleotides from the corresponding ribonucleotides. The protein is Ribonucleoside-diphosphate reductase subunit beta (nrdF) of Mycoplasma pneumoniae (strain ATCC 29342 / M129 / Subtype 1) (Mycoplasmoides pneumoniae).